The following is a 648-amino-acid chain: Cell surface glycoprotein MUC18 (648 aa).

Residues 1–23 (MGLPKLVCVFLFAACCCCRRAAG) form the signal peptide. Ig-like V-type domains lie at 24 to 131 (VPGE…HYVE) and 141 to 244 (PTIQ…KEVT). The Extracellular portion of the chain corresponds to 24-563 (VPGEEKQPVP…LPQPESKGVV (540 aa)). Disulfide bonds link cysteine 50/cysteine 118, cysteine 163/cysteine 225, cysteine 274/cysteine 322, cysteine 367/cysteine 409, and cysteine 454/cysteine 501. The N-linked (GlcNAc...) asparagine glycan is linked to asparagine 58. 3 consecutive Ig-like C2-type domains span residues 246–332 (PVFY…TTIT), 337–426 (PLEL…QLVS), and 432–512 (SPWM…SNTT). Residues 281–304 (QPHFTINKKDPSTGEMEEESTDEN) form a disordered region. N-linked (GlcNAc...) asparagine glycosylation occurs at asparagine 510. A compositionally biased stretch (polar residues) spans 532–549 (TGLSTLTVSPHTRANSTS). The segment at 532 to 554 (TGLSTLTVSPHTRANSTSTEKKL) is disordered. A helical transmembrane segment spans residues 564–584 (IVAVIVCTLVLAVLGAALYFF). The Cytoplasmic segment spans residues 585–648 (YKKGKLPCGR…QGEKYIDLRH (64 aa)). Phosphoserine occurs at positions 608 and 616. Positions 625–648 (LLQGSNGDKRAPGDQGEKYIDLRH) are disordered. Residues 631 to 648 (GDKRAPGDQGEKYIDLRH) are compositionally biased toward basic and acidic residues.

In terms of tissue distribution, detected in melanoma cell lines.

The protein resides in the membrane. Its function is as follows. Plays a role in cell adhesion, and in cohesion of the endothelial monolayer at intercellular junctions in vascular tissue. Its expression may allow melanoma cells to interact with cellular elements of the vascular system, thereby enhancing hematogeneous tumor spread. Could be an adhesion molecule active in neural crest cells during embryonic development. Acts as a surface receptor that triggers tyrosine phosphorylation of FYN and PTK2/FAK1, and a transient increase in the intracellular calcium concentration. The polypeptide is Cell surface glycoprotein MUC18 (Mcam) (Mus musculus (Mouse)).